The chain runs to 67 residues: Mu-conotoxin TsIIIA (67 aa).

The signal sequence occupies residues Met1–Ala20. Residues Val21–Arg48 constitute a propeptide that is removed on maturation. Disulfide bonds link Cys50–Cys59, Cys51–Cys64, and Cys55–Cys65.

This sequence belongs to the conotoxin M superfamily. In terms of tissue distribution, expressed by the venom duct.

It localises to the secreted. Mu-conotoxins block voltage-gated sodium channels (Nav). This toxin specifically inhibits mammalian Nav1.8/SCN10A sodium currents (IC(50)=2.11 uM) without inducing a shift in the current-voltage relationship of this channel. In vivo, shows potent analgesic activity in a mice hotplate analgesic assay. In addition, this toxin has better analgesic effects than Ziconotide, an analgesic drug. This chain is Mu-conotoxin TsIIIA, found in Conus tessulatus (Tessellate cone).